The sequence spans 75 residues: Putative membrane protein insertion efficiency factor (75 aa).

This sequence belongs to the UPF0161 family.

Its subcellular location is the cell inner membrane. Could be involved in insertion of integral membrane proteins into the membrane. In Leptospira biflexa serovar Patoc (strain Patoc 1 / ATCC 23582 / Paris), this protein is Putative membrane protein insertion efficiency factor.